Consider the following 432-residue polypeptide: Adenylosuccinate synthetase (432 aa).

Residues 13 to 19 and 41 to 43 each bind GTP; these read GDEGKGK and GHT. Aspartate 14 (proton acceptor) is an active-site residue. Positions 14 and 41 each coordinate Mg(2+). Residues 14–17, 39–42, threonine 130, arginine 144, glutamine 225, threonine 240, and arginine 304 each bind IMP; these read DEGK and NAGH. Histidine 42 (proton donor) is an active-site residue. 300-306 is a substrate binding site; the sequence is AVTGRPR. GTP-binding positions include arginine 306, 332–334, and 415–417; these read KLD and STG.

The protein belongs to the adenylosuccinate synthetase family. In terms of assembly, homodimer. Requires Mg(2+) as cofactor.

The protein resides in the cytoplasm. It catalyses the reaction IMP + L-aspartate + GTP = N(6)-(1,2-dicarboxyethyl)-AMP + GDP + phosphate + 2 H(+). It functions in the pathway purine metabolism; AMP biosynthesis via de novo pathway; AMP from IMP: step 1/2. Its function is as follows. Plays an important role in the de novo pathway of purine nucleotide biosynthesis. Catalyzes the first committed step in the biosynthesis of AMP from IMP. This chain is Adenylosuccinate synthetase, found in Glaesserella parasuis serovar 5 (strain SH0165) (Haemophilus parasuis).